The sequence spans 1067 residues: Dorsal-ventral patterning protein tolloid (1067 aa).

The N-terminal stretch at 1–36 (MKGMRLMPMKMKAKLVVLSVGALWMMMFFLVDYAEG) is a signal peptide. Positions 37 to 136 (RRLSQLPESE…NGQPIQRRRR (100 aa)) are excised as a propeptide. The 203-residue stretch at 136 to 338 (RAVTVRKERT…VQANLLYKCA (203 aa)) folds into the Peptidase M12A domain. Residue Asn176 is glycosylated (N-linked (GlcNAc...) asparagine). 5 disulfide bridges follow: Cys179/Cys337, Cys201/Cys223, Cys203/Cys204, Cys340/Cys390, and Cys417/Cys439. His231 contributes to the Zn(2+) binding site. Residue Glu232 is part of the active site. Residues His235 and His241 each contribute to the Zn(2+) site. Short sequence motifs (cell attachment site) lie at residues 245-247 (RGD) and 325-327 (RGD). CUB domains are found at residues 340–477 (CGRT…FEVV) and 478–591 (CGGD…LMLD). An N-linked (GlcNAc...) asparagine glycan is attached at Asn441. 6 disulfide bridges follow: Cys478/Cys505, Cys532/Cys554, Cys595/Cys606, Cys602/Cys615, Cys617/Cys630, and Cys634/Cys662. N-linked (GlcNAc...) asparagine glycosylation is present at Asn543. The region spanning 591 to 631 (DVDECKFTDHGCQHLCINTLGSYQCGCRAGYELQANGKTCE) is the EGF-like 1; calcium-binding domain. One can recognise a CUB 3 domain in the interval 634–753 (CGGVVDATKS…SGFVAKFVID (120 aa)). N-linked (GlcNAc...) asparagine glycans are attached at residues Asn644 and Asn677. 8 cysteine pairs are disulfide-bonded: Cys693-Cys716, Cys757-Cys768, Cys764-Cys777, Cys779-Cys792, Cys797-Cys823, Cys850-Cys872, Cys910-Cys940, and Cys967-Cys989. One can recognise an EGF-like 2; calcium-binding domain in the interval 753–793 (DVDECSMNNGGCQHRCRNTFGSYQCSCRNGYTLAENGHNCT). N-linked (GlcNAc...) asparagine glycosylation occurs at Asn791. 2 consecutive CUB domains span residues 797 to 909 (CKFE…FVSE) and 910 to 1026 (CGGY…FMAV). N-linked (GlcNAc...) asparagine glycans are attached at residues Asn864 and Asn918.

The cofactor is Zn(2+).

Its function is as follows. Metalloprotease which cleaves TGF-beta family ligands daw, Actbeta and myo in vitro. Cleavage of daw enhances its signaling activity. Cleaves dorsal-ventral patterning protein sog. Processes sog more efficiently than metalloprotease tld which also cleaves sog. Required for normal dorsal development. TLD may interact physically with DPP-C protein. In Drosophila melanogaster (Fruit fly), this protein is Dorsal-ventral patterning protein tolloid (tld).